Reading from the N-terminus, the 270-residue chain is Regulatory protein RecX (270 aa).

Belongs to the RecX family.

The protein resides in the cytoplasm. Functionally, modulates RecA activity. The sequence is that of Regulatory protein RecX from Bacillus thuringiensis subsp. konkukian (strain 97-27).